The chain runs to 85 residues: UPF0297 protein LBUL_1485 (85 aa).

The protein belongs to the UPF0297 family.

The sequence is that of UPF0297 protein LBUL_1485 from Lactobacillus delbrueckii subsp. bulgaricus (strain ATCC BAA-365 / Lb-18).